A 301-amino-acid polypeptide reads, in one-letter code: MDIRDKILKLKKEKGAIILAHYYQIPEIQEIADYVGDSYYLSKIAKDCEENIIVFCGVKFMAESAKILSPEKTVILPVMEAGCVMADMATEEGLAKLKEEHPNAKVVCYINSSTEVKALSDVCCTSSNAENIINNLEEKEIIFLPDRNLGSYIQEKTPDKKFILWNGFCIVHEAIQKEEILRLKREHEGILTVAHPECSKEIRDISDFIGSTSEIINFVNNSSNKKFIIITEEGVLHQLRKNGEEKEFYIPYGKMVCRNMKMTTLKDLYESLLKMENKIEIDEDLRLKAYNSLKNMHKLGG.

2 residues coordinate iminosuccinate: His-21 and Ser-38. Cys-83 serves as a coordination point for [4Fe-4S] cluster. Residues 109 to 111 (YIN) and Ser-126 contribute to the iminosuccinate site. Cys-169 lines the [4Fe-4S] cluster pocket. Iminosuccinate-binding positions include 195 to 197 (HPE) and Thr-212. [4Fe-4S] cluster is bound at residue Cys-257.

Belongs to the quinolinate synthase family. Type 2 subfamily. Requires [4Fe-4S] cluster as cofactor.

It is found in the cytoplasm. It catalyses the reaction iminosuccinate + dihydroxyacetone phosphate = quinolinate + phosphate + 2 H2O + H(+). It functions in the pathway cofactor biosynthesis; NAD(+) biosynthesis; quinolinate from iminoaspartate: step 1/1. In terms of biological role, catalyzes the condensation of iminoaspartate with dihydroxyacetone phosphate to form quinolinate. The polypeptide is Quinolinate synthase (Clostridium perfringens (strain SM101 / Type A)).